The primary structure comprises 179 residues: ATP-dependent protease subunit HslV (179 aa).

The active site involves Thr7. Positions 162, 165, and 168 each coordinate Na(+).

The protein belongs to the peptidase T1B family. HslV subfamily. A double ring-shaped homohexamer of HslV is capped on each side by a ring-shaped HslU homohexamer. The assembly of the HslU/HslV complex is dependent on binding of ATP.

It localises to the cytoplasm. The enzyme catalyses ATP-dependent cleavage of peptide bonds with broad specificity.. Its activity is regulated as follows. Allosterically activated by HslU binding. Its function is as follows. Protease subunit of a proteasome-like degradation complex believed to be a general protein degrading machinery. This chain is ATP-dependent protease subunit HslV, found in Nitrosococcus oceani (strain ATCC 19707 / BCRC 17464 / JCM 30415 / NCIMB 11848 / C-107).